Here is a 121-residue protein sequence, read N- to C-terminus: MKKVLALMVAATLGLSSVAFAADTTATATPAATSTTATVAAQTKATQHQKHKVTKKTTEQKAQAAKKHEKKASVQKAPVQKAQAAKKHVKKASVQKAPVQKAQAAKKHHKTAKKPVAAPAA.

Residues 1–21 (MKKVLALMVAATLGLSSVAFA) form the signal peptide. Positions 22 to 63 (ADTTATATPAATSTTATVAAQTKATQHQKHKVTKKTTEQKAQ) are excised as a propeptide. The interval 40–121 (AAQTKATQHQ…AKKPVAAPAA (82 aa)) is disordered. Residues 74-83 (VQKAPVQKAQ) are compositionally biased toward low complexity. The span at 84–93 (AAKKHVKKAS) shows a compositional bias: basic residues. Over residues 94–103 (VQKAPVQKAQ) the composition is skewed to low complexity. The segment covering 104-113 (AAKKHHKTAK) has biased composition (basic residues).

Belongs to the Asr family. In terms of processing, proteolytic processing gives rise to the active protein.

It localises to the periplasm. Required for growth and/or survival at acidic conditions. This Yersinia pseudotuberculosis serotype O:1b (strain IP 31758) protein is Acid shock protein.